Consider the following 498-residue polypeptide: NADH-quinone oxidoreductase subunit N 2 (498 aa).

Transmembrane regions (helical) follow at residues 19 to 39 (VATQ…IALF), 47 to 67 (IVGY…IPLW), 83 to 103 (YSLT…VLSL), 114 to 134 (SEYY…AQGA), 136 to 156 (LIIL…LTGF), 171 to 191 (LLIG…LYGA), 215 to 235 (IYLL…VAMA), 249 to 269 (PTPI…AALL), 282 to 302 (IWAP…NIGA), 317 to 337 (IGHA…GGIA), 345 to 365 (VLLY…VLIA), 389 to 409 (LAVA…TGGF), 420 to 440 (WLSG…IAAF), and 468 to 488 (AGLA…TPAI).

Belongs to the complex I subunit 2 family. In terms of assembly, NDH-1 is composed of 14 different subunits. Subunits NuoA, H, J, K, L, M, N constitute the membrane sector of the complex.

The protein localises to the cell membrane. It carries out the reaction a quinone + NADH + 5 H(+)(in) = a quinol + NAD(+) + 4 H(+)(out). In terms of biological role, NDH-1 shuttles electrons from NADH, via FMN and iron-sulfur (Fe-S) centers, to quinones in the respiratory chain. The immediate electron acceptor for the enzyme in this species is believed to be ubiquinone. Couples the redox reaction to proton translocation (for every two electrons transferred, four hydrogen ions are translocated across the cytoplasmic membrane), and thus conserves the redox energy in a proton gradient. The polypeptide is NADH-quinone oxidoreductase subunit N 2 (Roseiflexus castenholzii (strain DSM 13941 / HLO8)).